We begin with the raw amino-acid sequence, 236 residues long: WUSCHEL-related homeobox 4 (236 aa).

Residues 88 to 152 (AGTTRWNPSA…NHKARERQKQ (65 aa)) constitute a DNA-binding region (homeobox; WUS-type). The tract at residues 169–188 (PATANETKEAPEKKEKDVED) is disordered. Positions 174–187 (ETKEAPEKKEKDVE) are enriched in basic and acidic residues.

It belongs to the WUS homeobox family.

The protein resides in the nucleus. Functionally, transcription factor which may be involved in developmental processes. The sequence is that of WUSCHEL-related homeobox 4 (WOX4) from Oryza sativa subsp. indica (Rice).